The following is a 388-amino-acid chain: Succinate--CoA ligase [ADP-forming] subunit beta (388 aa).

Residues 9–244 (KDLLVSYDIA…PSQENVRDVL (236 aa)) enclose the ATP-grasp domain. ATP contacts are provided by residues Lys-46, 53-55 (GRG), Val-102, and Glu-107. Mg(2+) is bound by residues Asn-199 and Asp-213. Substrate is bound by residues Asn-264 and 321–323 (GIM).

It belongs to the succinate/malate CoA ligase beta subunit family. Heterotetramer of two alpha and two beta subunits. It depends on Mg(2+) as a cofactor.

It carries out the reaction succinate + ATP + CoA = succinyl-CoA + ADP + phosphate. It catalyses the reaction GTP + succinate + CoA = succinyl-CoA + GDP + phosphate. It participates in carbohydrate metabolism; tricarboxylic acid cycle; succinate from succinyl-CoA (ligase route): step 1/1. Functionally, succinyl-CoA synthetase functions in the citric acid cycle (TCA), coupling the hydrolysis of succinyl-CoA to the synthesis of either ATP or GTP and thus represents the only step of substrate-level phosphorylation in the TCA. The beta subunit provides nucleotide specificity of the enzyme and binds the substrate succinate, while the binding sites for coenzyme A and phosphate are found in the alpha subunit. The protein is Succinate--CoA ligase [ADP-forming] subunit beta of Chlamydia caviae (strain ATCC VR-813 / DSM 19441 / 03DC25 / GPIC) (Chlamydophila caviae).